The chain runs to 288 residues: Small ribosomal subunit protein uS3 (288 aa).

The KH type-2 domain maps to 39-107 (VREYLKAKLK…PVAVNIEEVR (69 aa)). The interval 209–288 (GRNDLPAAET…AAAAADGKGE (80 aa)) is disordered. A compositionally biased stretch (basic and acidic residues) spans 219–238 (PRPEEERRPRGPRRDGRPGD). Positions 277 to 288 (APAAAAADGKGE) are enriched in low complexity.

The protein belongs to the universal ribosomal protein uS3 family. Part of the 30S ribosomal subunit. Forms a tight complex with proteins S10 and S14.

Functionally, binds the lower part of the 30S subunit head. Binds mRNA in the 70S ribosome, positioning it for translation. This Acidovorax sp. (strain JS42) protein is Small ribosomal subunit protein uS3.